The chain runs to 2877 residues: Desmoplakin (2877 aa).

The interval 1-20 is disordered; sequence MSCNGGSHPRINTLGRMTRA. The tract at residues 1 to 591 is interaction with PKP1, JUP, PKP2; that stretch reads MSCNGGSHPR…DYMKTIEDLE (591 aa). A globular 1 region spans residues 1-1063; sequence MSCNGGSHPR…ANSENCNKNK (1063 aa). Phosphoserine occurs at positions 22 and 62. Y65 carries the phosphotyrosine modification. T70 is modified (phosphothreonine). 3 positions are modified to phosphoserine: S174, S175, and S183. 2 Spectrin repeats span residues 185–278 and 279–382; these read SGWD…HLRQ and LQNI…LKEN. Residues 383–453 form a Spectrin 3a repeat; it reads AAYFQFFEEA…NLVNKSKKIV (71 aa). The 58-residue stretch at 465–522 folds into the SH3 domain; sequence NKPIILRALCDYKQDQKIVHKGDECILKDNNERSKWYVTGPGGVDMLVPSVGLIIPPP. Residues 523–552 form a Spectrin 3b repeat; sequence NPLAVDLSCKIEQYYEAILALWNQLYINMK. Spectrin repeat units follow at residues 553–634, 661–776, and 777–890; these read SLVS…IQLP, VIET…SLCS, and VRAL…DLEK. 4 coiled-coil regions span residues 1034-1280, 1313-1354, 1395-1443, and 1473-1926; these read LKLK…AEEN, NARH…YENE, TSGY…QKAS, and KQSL…KLED. A central fibrous rod domain region spans residues 1064-1952; the sequence is FLDQNLQKYQ…QKEIDKLRQR (889 aa). S1665, S1715, and S2031 each carry phosphoserine. Residues 1953–2877 form a globular 2 region; that stretch reads PYGSHRETQT…YSFSSSSIGY (925 aa). The segment at 1967–2215 is 4.5 X 38 AA tandem repeats (Domain A); that stretch reads TVDSSKLVFD…LLLSVQKRSM (249 aa). Plectin repeat units lie at residues 2016 to 2052, 2053 to 2090, 2091 to 2128, 2129 to 2166, 2170 to 2204, 2205 to 2240, 2258 to 2295, 2296 to 2333, 2334 to 2371, 2372 to 2409, 2413 to 2447, 2463 to 2500, 2514 to 2551, 2617 to 2654, 2655 to 2692, 2731 to 2768, and 2769 to 2806; these read QPFL…PEST, VMLL…FDDR, QQIY…RETG, MRLL…RDLY, NDPR…PHTG, LLLL…PSTV, KDFL…PGTA, LELL…IEFK, EKLL…KGHG, IRLL…EELS, SDPS…EETG, SQKN…YETF, TITG…RKFF, SDPL…SITG, QRLL…QDMA, QRFL…GRAA, and QRLQ…DITG. Phosphoserine is present on residues S2214, S2216, and S2232. A 4.5 X 38 AA tandem repeats (Domain B) region spans residues 2251–2453; that stretch reads DEVGERIKDF…EETGLCLLPL (203 aa). An LRR 15 repeat occupies 2603–2628; that stretch reads ISSVRNLTIRSSSLSDPLEESSPIAA. Positions 2616–2828 are 4.5 X 38 AA tandem repeats (Domain C); the sequence is LSDPLEESSP…GLPSPYNMSA (213 aa). Phosphoserine is present on residues S2817 and S2822. The tract at residues 2817 to 2877 is disordered; that stretch reads SKGLPSPYNM…YSFSSSSIGY (61 aa). A Phosphotyrosine modification is found at Y2824. Phosphoserine is present on residues S2827 and S2831. Positions 2830-2853 are 6 X 4 AA tandem repeats of G-S-R-[SR]; the sequence is GSRSGSRSGSRSGSRSGSRSGSRR. Positions 2830–2853 are enriched in low complexity; it reads GSRSGSRSGSRSGSRSGSRSGSRR. Residues R2832 and R2853 each carry the omega-N-methylarginine modification. Phosphoserine is present on S2855. Position 2859 is a phosphothreonine (T2859). Residues 2862–2877 show a composition bias toward low complexity; it reads SSYSYSYSFSSSSIGY. Phosphoserine is present on S2874.

It belongs to the plakin or cytolinker family. As to quaternary structure, homodimer. Interacts with COL17A1 (via cytoplasmic region). Interacts with DSC2. Interacts with PKP1. Interacts with PKP2. Interacts weakly with TMEM65. Phosphorylation at Ser-2855 increases association with intermediate filament cytokeratin, potentially facilitating interaction between desmosome junctions and intermediate filament architecture. Expressed in cardiomyocytes (at protein level).

Its subcellular location is the cell junction. It localises to the desmosome. The protein resides in the cell membrane. It is found in the cytoplasm. In terms of biological role, major high molecular weight protein of desmosomes. Regulates profibrotic gene expression in cardiomyocytes via activation of the MAPK14/p38 MAPK signaling cascade and increase in TGFB1 protein abundance. This Rattus norvegicus (Rat) protein is Desmoplakin.